We begin with the raw amino-acid sequence, 306 residues long: MLIDRFGRPVTNLRISLTKECNLNCFYCHREGQLDGERTMKPEEIERIVRIASRLGIKKVKLTGGEPTIRKDIVEIIRRIRPYVVDLSLTTNGTTLYTLAEELKEAGLDRVNISLDTLDRKKYKMITGFDVLDQVIKGIEKATKLFYPVKLNMVVMRGINDDEIWDLIRFAGKVNAILQLIEIEVPREMENSQFFKDFFYPLKPLEEEFEKIAVEIRERRMHRRRKYFLPVDGKVVEVEVVRSMHNTVFCMNCTRLRLTADGYLKTCLLRRDDLIDILGPLRNGASDAELVDIFKRAVLMRRPYWT.

The Radical SAM core domain maps to 5 to 232 (RFGRPVTNLR…RRRKYFLPVD (228 aa)). Residue R14 participates in GTP binding. The [4Fe-4S] cluster site is built by C21 and C25. Y27 lines the S-adenosyl-L-methionine pocket. Residue C28 coordinates [4Fe-4S] cluster. K61 is a GTP binding site. G65 serves as a coordination point for S-adenosyl-L-methionine. A GTP-binding site is contributed by T90. S114 lines the S-adenosyl-L-methionine pocket. A GTP-binding site is contributed by K150. M189 contributes to the S-adenosyl-L-methionine binding site. Residues C250 and C253 each contribute to the [4Fe-4S] cluster site. Residue 255–257 (RLR) coordinates GTP. C267 serves as a coordination point for [4Fe-4S] cluster.

This sequence belongs to the radical SAM superfamily. MoaA family. Requires [4Fe-4S] cluster as cofactor.

It carries out the reaction GTP + AH2 + S-adenosyl-L-methionine = (8S)-3',8-cyclo-7,8-dihydroguanosine 5'-triphosphate + 5'-deoxyadenosine + L-methionine + A + H(+). It functions in the pathway cofactor biosynthesis; molybdopterin biosynthesis. Functionally, catalyzes the cyclization of GTP to (8S)-3',8-cyclo-7,8-dihydroguanosine 5'-triphosphate. The chain is Probable GTP 3',8-cyclase from Pyrococcus abyssi (strain GE5 / Orsay).